Consider the following 320-residue polypeptide: Retron Ec86 reverse transcriptase (320 aa).

Positions valine 34–isoleucine 248 constitute a Reverse transcriptase domain. Mg(2+) is bound by residues aspartate 119, aspartate 197, and aspartate 198. The necessary and required for recognition and binding of RNA stretch occupies residues lysine 230–threonine 320.

Belongs to the bacterial reverse transcriptase family.

It catalyses the reaction DNA(n) + a 2'-deoxyribonucleoside 5'-triphosphate = DNA(n+1) + diphosphate. Its function is as follows. Reverse transcriptase (RT) component of antiviral defense system retron Ec86, composed of a non-coding RNA (ncRNA), a ribosyltransferase/DNA-binding protein and this RT. Expression of the 3-gene retron confers protection against bacteriophage T5. At multiplicity of infection (MOI) of 0.02 cultures grow normally when infected with T5 without collapsing, at MOI 2 cultures enter growth stasis. Responsible for synthesis of msDNA (a branched molecule with RNA linked by a 2',5'-phosphodiester bond to ssDNA). The retron transcript serves as primer (from a conserved internal G residue) and template for the reaction, and codes for the RT. Recognizes only its cognate RNA as a primer template. Overexpression of the ncRNA and RT (without the ribosyltransferase), which leads to increased levels of msDNA, is mutagenic in vivo. This may be due to a mismatch in the msDNA stem which binds and sequesters MutS and/or MutL. The chain is Retron Ec86 reverse transcriptase from Escherichia coli.